Consider the following 50-residue polypeptide: MAVPKRRKSRSNTRHRRSQWKAAAPDLVPIVVDGERRLVPRPLVRYFQQG.

Basic residues predominate over residues 1-19 (MAVPKRRKSRSNTRHRRSQ). Residues 1–21 (MAVPKRRKSRSNTRHRRSQWK) are disordered.

It belongs to the bacterial ribosomal protein bL32 family.

The protein is Large ribosomal subunit protein bL32A of Saccharopolyspora erythraea (strain ATCC 11635 / DSM 40517 / JCM 4748 / NBRC 13426 / NCIMB 8594 / NRRL 2338).